The sequence spans 161 residues: uncharacterized protein (161 aa).

A helical membrane pass occupies residues 16–36 (KLGLVVAIFFFMMGTTVVVLY).

Its subcellular location is the membrane. This is an uncharacterized protein from Encephalitozoon cuniculi (strain GB-M1) (Microsporidian parasite).